A 666-amino-acid chain; its full sequence is Protein OS-9 (666 aa).

A signal peptide spans 1 to 30; that stretch reads MAAEALLSSLLGLLFLGLLLPAHLTGGVGS. Residues 108–230 enclose the MRH domain; it reads APCLLKTKDW…SIRTSRLCPH (123 aa). A disulfide bridge links cysteine 110 with cysteine 123. 3 residues coordinate a mannooligosaccharide derivative: tryptophan 117, tryptophan 118, and glutamine 130. The N-linked (GlcNAc...) asparagine glycan is linked to asparagine 177. Disulfide bonds link cysteine 181/cysteine 216 and cysteine 196/cysteine 228. Aspartate 182, arginine 188, glutamate 212, and tyrosine 218 together coordinate a mannooligosaccharide derivative. Disordered stretches follow at residues 261-356, 370-449, 505-540, and 631-666; these read RQAE…NVQV, EELK…SDRE, ESQS…EHRV, and EANK…EFDF. Basic and acidic residues-rich tracts occupy residues 263–281 and 294–310; these read AESK…DTDH and PKKE…ESEF. Low complexity predominate over residues 320 to 332; it reads QATGTEEAQAGEQ. Basic and acidic residues-rich tracts occupy residues 370–379 and 395–412; these read EELKGAEKGK and PQRE…RGLV. The segment covering 413-429 has biased composition (acidic residues); sequence EEEDGDEEEEDEDEDEQ. Residues 434–449 are compositionally biased toward basic and acidic residues; sequence EFEKELEGMLLPSDRE. Residues 631–646 show a composition bias toward basic and acidic residues; the sequence is EANKERQRQSELESNY. Acidic residues predominate over residues 657–666; that stretch reads DTGDLDEFDF.

The protein belongs to the OS-9 family. As to quaternary structure, component of the HRD1 complex, which comprises at least SYNV1/HRD1, DERL1/2, FAM8A1, HERPUD1/HERP, OS9, SEL1L and UBE2J1. FAM8A1 is stabilized by interaction with SYNV1, which prevents its proteasomal degradation. OS9 and UBE2J1 recruitment to the complex may be mediated by SEL1L. Through this complex, may interact with ERLEC1 and HSPA5. Interacts (via C-terminus) with CPNE6 (via second C2 domain); this interaction occurs in a calcium-dependent manner in vitro. Interacts with CREB3. Post-translationally, intramolecular disulfide bonds.

It localises to the endoplasmic reticulum lumen. In terms of biological role, lectin component of the HRD1 complex, which functions in endoplasmic reticulum (ER) quality control and ER-associated degradation (ERAD). Specifically recognizes and binds improperly folded glycoproteins as well as hyperglycosylated proteins, retain them in the ER, and transfers them to the ubiquitination machinery and promote their degradation. Possible targets include TRPV4 as well as hyperglycosylated HSP90B1. In Rattus norvegicus (Rat), this protein is Protein OS-9 (Os9).